The sequence spans 974 residues: GATOR2 complex protein WDR59 (974 aa).

WD repeat units lie at residues 57–98 (QSKW…GEVG), 103–143 (GHTR…KPTV), 146–185 (SAVA…TAVE), 189–229 (AHLS…KYLN), 232–276 (PCQV…TPVH), 278–318 (FVGH…RVDS), and 319–362 (QMQR…TASH). Positions 350–374 (HTEDTDHQHTASHGEEEALKEDPPR) are disordered. The RWD domain maps to 393–494 (QEFSLINVQI…RQLVSCLESF (102 aa)). At serine 564 the chain carries Phosphoserine. Residues 668-706 (LNVNDIQETCQKNAASALLVGRKDLVQVWSLATVATDLC) form a WD 8 repeat. Serine 821, serine 822, and serine 830 each carry phosphoserine. The disordered stretch occupies residues 831 to 852 (LTYSDPRERERDQHDKNKRLLD). The segment covering 835–851 (DPRERERDQHDKNKRLL) has biased composition (basic and acidic residues). The C4-type zinc finger occupies 901-920 (YCSHCRSEVRGTQCAICKGF). Zn(2+)-binding residues include cysteine 902, cysteine 905, cysteine 914, cysteine 917, cysteine 927, cysteine 938, histidine 943, histidine 946, histidine 949, cysteine 960, cysteine 964, cysteine 966, and cysteine 968. The RING-type; atypical zinc-finger motif lies at 921–973 (TFQCAICHVAVRGSSNFCLTCGHGGHTSHMMEWFRTQEVCPTGCGCHCLLEST).

The protein belongs to the WD repeat WDR59 family. Component of the GATOR2 subcomplex, composed of MIOS, SEC13, SEH1L, WDR24 and WDR59. The GATOR2 complex interacts with CASTOR1 and CASTOR2; the interaction is negatively regulated by arginine. The GATOR2 complex interacts with SESN1, SESN2 and SESN3; the interaction is negatively regulated by amino acids. Interacts with DDB1-CUL4A/B E3 ligase complexes.

It localises to the lysosome membrane. With respect to regulation, the GATOR2 complex is negatively regulated by the upstream amino acid sensors CASTOR1 and SESN2, which sequester the GATOR2 complex in absence of amino acids. In the presence of abundant amino acids, GATOR2 is released from CASTOR1 and SESN2 and activated. Functionally, as a component of the GATOR2 complex, functions as an activator of the amino acid-sensing branch of the mTORC1 signaling pathway. The GATOR2 complex indirectly activates mTORC1 through the inhibition of the GATOR1 subcomplex. GATOR2 probably acts as an E3 ubiquitin-protein ligase toward GATOR1. In the presence of abundant amino acids, the GATOR2 complex mediates ubiquitination of the NPRL2 core component of the GATOR1 complex, leading to GATOR1 inactivation. In the absence of amino acids, GATOR2 is inhibited, activating the GATOR1 complex. In Homo sapiens (Human), this protein is GATOR2 complex protein WDR59.